The chain runs to 220 residues: Octanoyltransferase (220 aa).

The 176-residue stretch at 31 to 206 (DDTPDEVWLV…ELVTLLDYEQ (176 aa)) folds into the BPL/LPL catalytic domain. Substrate-binding positions include 70-77 (RGGQVTYH), 137-139 (SLG), and 150-152 (GLA). Residue C168 is the Acyl-thioester intermediate of the active site.

It belongs to the LipB family.

The protein resides in the cytoplasm. The catalysed reaction is octanoyl-[ACP] + L-lysyl-[protein] = N(6)-octanoyl-L-lysyl-[protein] + holo-[ACP] + H(+). Its pathway is protein modification; protein lipoylation via endogenous pathway; protein N(6)-(lipoyl)lysine from octanoyl-[acyl-carrier-protein]: step 1/2. Catalyzes the transfer of endogenously produced octanoic acid from octanoyl-acyl-carrier-protein onto the lipoyl domains of lipoate-dependent enzymes. Lipoyl-ACP can also act as a substrate although octanoyl-ACP is likely to be the physiological substrate. The chain is Octanoyltransferase from Vibrio campbellii (strain ATCC BAA-1116).